The chain runs to 396 residues: NDP-glycosyltransferase YjiC (396 aa).

UDP contacts are provided by residues Asn-18, Thr-234, Val-283, His-298, and 302 to 306 (NSTME).

The protein belongs to the UDP-glycosyltransferase family.

It catalyses the reaction an NDP-glycose + an acceptor = a glycosylated acceptor + NDP.. Its function is as follows. Glycosyltransferase that can glycosylate a wide range of substrates, including various flavonoids (flavones, flavonols, flavanones, flavanols, chalcones), isoflavonoids and stilbenes, to produce multiple glycosylated products. It can accept diverse nucleotide diphosphate-D/L-sugars as donors, including ADP-, GDP-, CDP-, TDP- or UDP-alpha-D-glucose, and catalyzes O-, N-, or S-glycosylation. In vitro, catalyzes the glycosylation of, among others, apigenin, 3-hydroxyflavone, phloretin or resveratrol, resulting in multiple glucosylated products, along with mono-, di-, tri- and tetraglucosides. Can also catalyze the glycosylation of the macrolide epothilone A with diverse NDP-D/L-sugars, forming different epothilone A glycoside derivatives. This Bacillus licheniformis (strain ATCC 14580 / DSM 13 / JCM 2505 / CCUG 7422 / NBRC 12200 / NCIMB 9375 / NCTC 10341 / NRRL NRS-1264 / Gibson 46) protein is NDP-glycosyltransferase YjiC.